The chain runs to 277 residues: Large ribosomal subunit protein uL2 (277 aa).

The tract at residues 222-259 (GSVMNPNDHPHGGGEGKSPVGRPSPVTPWGKPALGYKT) is disordered.

This sequence belongs to the universal ribosomal protein uL2 family. As to quaternary structure, part of the 50S ribosomal subunit. Forms a bridge to the 30S subunit in the 70S ribosome.

One of the primary rRNA binding proteins. Required for association of the 30S and 50S subunits to form the 70S ribosome, for tRNA binding and peptide bond formation. It has been suggested to have peptidyltransferase activity; this is somewhat controversial. Makes several contacts with the 16S rRNA in the 70S ribosome. The protein is Large ribosomal subunit protein uL2 of Clostridium beijerinckii (strain ATCC 51743 / NCIMB 8052) (Clostridium acetobutylicum).